The following is a 299-amino-acid chain: Protoheme IX farnesyltransferase 1 (299 aa).

9 consecutive transmembrane segments (helical) span residues 25–45, 47–67, 95–115, 119–139, 147–167, 173–193, 217–237, 243–263, and 279–299; these read VVVL…RAGV, WSVL…AAVV, LPAL…LLAF, LTAW…TGFL, IVIG…AVSG, PLLL…ALAI, ALHI…PYAI, LYLA…WVLY, and IGYL…LLNL.

This sequence belongs to the UbiA prenyltransferase family. Protoheme IX farnesyltransferase subfamily.

It is found in the cell inner membrane. The enzyme catalyses heme b + (2E,6E)-farnesyl diphosphate + H2O = Fe(II)-heme o + diphosphate. It participates in porphyrin-containing compound metabolism; heme O biosynthesis; heme O from protoheme: step 1/1. In terms of biological role, converts heme B (protoheme IX) to heme O by substitution of the vinyl group on carbon 2 of heme B porphyrin ring with a hydroxyethyl farnesyl side group. The chain is Protoheme IX farnesyltransferase 1 from Pseudomonas entomophila (strain L48).